The chain runs to 159 residues: Cyclic pyranopterin monophosphate synthase (159 aa).

Substrate-binding positions include 75–77 (LCH) and 113–114 (ME). D128 is an active-site residue.

This sequence belongs to the MoaC family. As to quaternary structure, homohexamer; trimer of dimers.

It carries out the reaction (8S)-3',8-cyclo-7,8-dihydroguanosine 5'-triphosphate = cyclic pyranopterin phosphate + diphosphate. The protein operates within cofactor biosynthesis; molybdopterin biosynthesis. In terms of biological role, catalyzes the conversion of (8S)-3',8-cyclo-7,8-dihydroguanosine 5'-triphosphate to cyclic pyranopterin monophosphate (cPMP). This chain is Cyclic pyranopterin monophosphate synthase, found in Thiobacillus denitrificans (strain ATCC 25259 / T1).